An 891-amino-acid chain; its full sequence is Aconitate hydratase A (891 aa).

Cys435, Cys501, and Cys504 together coordinate [4Fe-4S] cluster.

This sequence belongs to the aconitase/IPM isomerase family. As to quaternary structure, monomer. The cofactor is [4Fe-4S] cluster.

The enzyme catalyses citrate = D-threo-isocitrate. It catalyses the reaction (2S,3R)-3-hydroxybutane-1,2,3-tricarboxylate = 2-methyl-cis-aconitate + H2O. The protein operates within carbohydrate metabolism; tricarboxylic acid cycle; isocitrate from oxaloacetate: step 2/2. It participates in organic acid metabolism; propanoate degradation. Involved in the catabolism of short chain fatty acids (SCFA) via the tricarboxylic acid (TCA)(acetyl degradation route) and the 2-methylcitrate cycle I (propionate degradation route). Catalyzes the reversible isomerization of citrate to isocitrate via cis-aconitate. Also catalyzes the hydration of 2-methyl-cis-aconitate to yield (2R,3S)-2-methylisocitrate. The (2S,3S)-2-methylcitrate (2-MC) is a very poor substrate. The apo form of AcnA functions as a RNA-binding regulatory protein. The polypeptide is Aconitate hydratase A (acnA) (Salmonella typhimurium (strain LT2 / SGSC1412 / ATCC 700720)).